An 807-amino-acid chain; its full sequence is Serine/threonine-protein kinase AfsK (807 aa).

In terms of domain architecture, Protein kinase spans 16–272 (FEVLGRLGAG…QAQLAPHLFA (257 aa)). Residues 22–30 (LGAGGMGLV) and lysine 44 contribute to the ATP site. At serine 71 the chain carries Phosphoserine; by autocatalysis. The active-site Proton acceptor is aspartate 138. Threonine 168 is modified (phosphothreonine; by autocatalysis). Disordered regions lie at residues 292–328 (MIERRRGGRRTARRPPRPRPRRLRAAPQGPGAGHRLA) and 353–429 (AGPS…PSPA). Basic residues predominate over residues 297–315 (RGGRRTARRPPRPRPRRLR). Positions 353–363 (AGPSAAPDGGP) are enriched in low complexity.

This sequence belongs to the protein kinase superfamily. Ser/Thr protein kinase family. As to quaternary structure, interacts (via the N-terminal kinase domain) with KbpA; the interaction prevents autophosphorylation of AfsK. Post-translationally, autophosphorylated mainly on threonine residues. Some phosphorylation on serine residues. Autophosphorylation on Thr-168 is the major site enhancing kinase activity towards AfsR, and is regulated though interaction with KbpA.

The enzyme catalyses L-seryl-[protein] + ATP = O-phospho-L-seryl-[protein] + ADP + H(+). It carries out the reaction L-threonyl-[protein] + ATP = O-phospho-L-threonyl-[protein] + ADP + H(+). Component of the AfsK/AfsR system involved in the response of aerial mycelium formation to glucose. This Streptomyces griseus protein is Serine/threonine-protein kinase AfsK (afsK).